The following is a 311-amino-acid chain: MAGFCDSLGSCSVPHGLTRAIAHPPSYGRTDLSSGRRLWVNSAALSPAPYATGPGPAPSYAAATLAVPGSLLGASGGLAGADLAWLSLSGQQELLRLVRPPYSYSALIAMAIQSAPLRRLTLSQIYQYVAGNFPFYKRSKAGWQNSIRHNLSLNDCFKKVPRDENDPGKGNYWTLDPNCEKMFDNGNFRRKRRRRGETSEAAVPGASSPEGTALEPRGSTPQDPQTSPSPSEATTTCLSGFSTAMGALAGGFGALPDGLAHDFSLRRPPPTAAAHSPQIPNTAPGFAPGHQTGATGFRMGHLIYSRDGTEV.

Residues 99 to 193 constitute a DNA-binding region (fork-head); sequence RPPYSYSALI…DNGNFRRKRR (95 aa). Disordered regions lie at residues 188-237 and 263-294; these read FRRK…TTTC and FSLR…QTGA. The span at 219 to 231 shows a compositional bias: low complexity; sequence STPQDPQTSPSPS.

Its subcellular location is the nucleus. Functionally, possible transcriptional activator. This chain is Forkhead box protein I2, found in Mus musculus (Mouse).